Here is a 340-residue protein sequence, read N- to C-terminus: Phosphate acyltransferase (340 aa).

The protein belongs to the PlsX family. As to quaternary structure, homodimer. Probably interacts with PlsY.

The protein resides in the cytoplasm. The catalysed reaction is a fatty acyl-[ACP] + phosphate = an acyl phosphate + holo-[ACP]. Its pathway is lipid metabolism; phospholipid metabolism. Functionally, catalyzes the reversible formation of acyl-phosphate (acyl-PO(4)) from acyl-[acyl-carrier-protein] (acyl-ACP). This enzyme utilizes acyl-ACP as fatty acyl donor, but not acyl-CoA. This Clostridioides difficile (strain 630) (Peptoclostridium difficile) protein is Phosphate acyltransferase.